The following is a 311-amino-acid chain: 26S proteasome regulatory subunit RPN11 (311 aa).

In terms of domain architecture, MPN spans Val-32–Ala-167. Zn(2+) contacts are provided by His-114, His-116, and Asp-127. The short motif at His-114 to Asp-127 is the JAMM motif element.

This sequence belongs to the peptidase M67A family.

Acts as a regulatory subunit of the 26 proteasome which is involved in the ATP-dependent degradation of ubiquitinated proteins. The polypeptide is 26S proteasome regulatory subunit RPN11 (RPN11) (Eremothecium gossypii (strain ATCC 10895 / CBS 109.51 / FGSC 9923 / NRRL Y-1056) (Yeast)).